The primary structure comprises 198 residues: Holliday junction branch migration complex subunit RuvA (198 aa).

Residues 1 to 63 (MYDYIKGQLT…EDAHLLFGFH (63 aa)) are domain I. Residues 64–142 (TKDEKDVFLK…EAPQETGNTK (79 aa)) form a domain II region. The interval 143 to 147 (ARSNK) is flexible linker. The tract at residues 148–198 (AGNTQLDEAIEALLALGYKATELKKIRAFFEGTSETAEQYIKSALKLLMKG) is domain III.

The protein belongs to the RuvA family. In terms of assembly, homotetramer. Forms an RuvA(8)-RuvB(12)-Holliday junction (HJ) complex. HJ DNA is sandwiched between 2 RuvA tetramers; dsDNA enters through RuvA and exits via RuvB. An RuvB hexamer assembles on each DNA strand where it exits the tetramer. Each RuvB hexamer is contacted by two RuvA subunits (via domain III) on 2 adjacent RuvB subunits; this complex drives branch migration. In the full resolvosome a probable DNA-RuvA(4)-RuvB(12)-RuvC(2) complex forms which resolves the HJ.

The protein resides in the cytoplasm. The RuvA-RuvB-RuvC complex processes Holliday junction (HJ) DNA during genetic recombination and DNA repair, while the RuvA-RuvB complex plays an important role in the rescue of blocked DNA replication forks via replication fork reversal (RFR). RuvA specifically binds to HJ cruciform DNA, conferring on it an open structure. The RuvB hexamer acts as an ATP-dependent pump, pulling dsDNA into and through the RuvAB complex. HJ branch migration allows RuvC to scan DNA until it finds its consensus sequence, where it cleaves and resolves the cruciform DNA. In Streptococcus pyogenes serotype M18 (strain MGAS8232), this protein is Holliday junction branch migration complex subunit RuvA.